The sequence spans 335 residues: Deoxyhypusine hydroxylase (335 aa).

5 HEAT-like PBS-type repeats span residues 71–97, 104–130, 200–233, 238–264, and 271–298; these read LKHELAYCLGQTRNPASLPFLQQVAKD, CRHEAAEALGALGYEDSLEILKALRDN, LRYRAMFALRDLASPPDLPTATRAVEALAKGLKD, FRHEIAFVFGQLCHPASIPSLTEALSN, and VRHEAAEALGSLGDYEGVEETLRKFLND. Fe cation is bound by residues His-73, Glu-74, His-106, and Glu-107. His-240, Glu-241, His-273, and Glu-274 together coordinate Fe cation.

The protein belongs to the deoxyhypusine hydroxylase family. Fe(2+) serves as cofactor.

It is found in the cytoplasm. Its subcellular location is the nucleus. The enzyme catalyses [eIF5A protein]-deoxyhypusine + AH2 + O2 = [eIF5A protein]-hypusine + A + H2O. Its pathway is protein modification; eIF5A hypusination. In terms of biological role, catalyzes the hydroxylation of the N(6)-(4-aminobutyl)-L-lysine intermediate to form hypusine, an essential post-translational modification only found in mature eIF-5A factor. The chain is Deoxyhypusine hydroxylase (lia1) from Aspergillus fumigatus (strain ATCC MYA-4609 / CBS 101355 / FGSC A1100 / Af293) (Neosartorya fumigata).